The primary structure comprises 428 residues: MTAKWEKQEGNKGVLTFEVSAEEFEQALDQAFKKVSKDVQIPGFRKGKIPRGIFEKRFGVEALYQDAVDIVLPSAYTKAVEEADIFPIAQPSVDIDQIERGKELIFTAEVEVKPEVKLGEYKGLEVEEESVEVTDEDVEKEIENVRERHAELIVKEEEAIENGDTAVIDFEGFQDGVAFEGGKGENHSLEIGSGQFIPGFEEQLIGKKAGEETEVTVTFPEEYHAEDLAGKEAVFNVKINEVKAKELPELDDEFAKDVDEEVESLDELKKKKRNELETNKKQEVENKKREELIQKASDNVEVDIPEAMVDTEVNQMVREFEQQLQMQGMTLEMYAQFSGQDEDALKEQMREDAAKRVKTNLTLEAISEAEGIKPSEEDIKAELEKMASMYGAEVDQLVQMLGGNTETLENDLKVKAAIDFLAENSKTK.

Residues 163–248 (GDTAVIDFEG…INEVKAKELP (86 aa)) form the PPIase FKBP-type domain.

This sequence belongs to the FKBP-type PPIase family. Tig subfamily.

Its subcellular location is the cytoplasm. The enzyme catalyses [protein]-peptidylproline (omega=180) = [protein]-peptidylproline (omega=0). In terms of biological role, involved in protein export. Acts as a chaperone by maintaining the newly synthesized protein in an open conformation. Functions as a peptidyl-prolyl cis-trans isomerase. The protein is Trigger factor of Oceanobacillus iheyensis (strain DSM 14371 / CIP 107618 / JCM 11309 / KCTC 3954 / HTE831).